The sequence spans 125 residues: Large ribosomal subunit protein bL12 (125 aa).

The protein belongs to the bacterial ribosomal protein bL12 family. In terms of assembly, homodimer. Part of the ribosomal stalk of the 50S ribosomal subunit. Forms a multimeric L10(L12)X complex, where L10 forms an elongated spine to which 2 to 4 L12 dimers bind in a sequential fashion. Binds GTP-bound translation factors.

Its function is as follows. Forms part of the ribosomal stalk which helps the ribosome interact with GTP-bound translation factors. Is thus essential for accurate translation. This chain is Large ribosomal subunit protein bL12, found in Helicobacter acinonychis (strain Sheeba).